The sequence spans 243 residues: Small ribosomal subunit protein uS3 (243 aa).

One can recognise a KH type-2 domain in the interval 39–110; the sequence is IRKFIHKKYG…QVRINVVEVE (72 aa). Residues 217-243 are disordered; the sequence is QQLPVGATPRRRAGRRPQQFEDRSNEG. Residues 234–243 are compositionally biased toward basic and acidic residues; the sequence is QQFEDRSNEG.

This sequence belongs to the universal ribosomal protein uS3 family. As to quaternary structure, part of the 30S ribosomal subunit. Forms a tight complex with proteins S10 and S14.

Its function is as follows. Binds the lower part of the 30S subunit head. Binds mRNA in the 70S ribosome, positioning it for translation. The sequence is that of Small ribosomal subunit protein uS3 from Synechococcus sp. (strain WH7803).